A 471-amino-acid polypeptide reads, in one-letter code: ATP synthase subunit beta 1 (471 aa).

Residue 157–164 coordinates ATP; it reads GGAGVGKT.

It belongs to the ATPase alpha/beta chains family. In terms of assembly, F-type ATPases have 2 components, CF(1) - the catalytic core - and CF(0) - the membrane proton channel. CF(1) has five subunits: alpha(3), beta(3), gamma(1), delta(1), epsilon(1). CF(0) has three main subunits: a(1), b(2) and c(9-12). The alpha and beta chains form an alternating ring which encloses part of the gamma chain. CF(1) is attached to CF(0) by a central stalk formed by the gamma and epsilon chains, while a peripheral stalk is formed by the delta and b chains.

Its subcellular location is the cell inner membrane. It catalyses the reaction ATP + H2O + 4 H(+)(in) = ADP + phosphate + 5 H(+)(out). Its function is as follows. Produces ATP from ADP in the presence of a proton gradient across the membrane. The catalytic sites are hosted primarily by the beta subunits. The chain is ATP synthase subunit beta 1 from Pelobacter propionicus (strain DSM 2379 / NBRC 103807 / OttBd1).